The sequence spans 316 residues: Ubiquinol oxidase, mitochondrial (316 aa).

Residues Met-1–Ser-26 constitute a mitochondrion transit peptide. A helical transmembrane segment spans residues Val-124–Leu-144. Fe cation-binding residues include Glu-131, Glu-170, and His-173. Residues Met-189 to Phe-209 traverse the membrane as a helical segment. Fe cation is bound by residues Glu-221, Glu-272, and His-275.

The protein belongs to the alternative oxidase family. It depends on Fe cation as a cofactor.

The protein resides in the mitochondrion inner membrane. The enzyme catalyses 2 a ubiquinol + O2 = 2 a ubiquinone + 2 H2O. In terms of biological role, alternative oxidase which function may be to reoxidize reducing equivalents produced by glycolysis such as ubiquinol. This Batrachochytrium dendrobatidis (strain JAM81 / FGSC 10211) (Frog chytrid fungus) protein is Ubiquinol oxidase, mitochondrial (AOX).